Here is a 1372-residue protein sequence, read N- to C-terminus: DNA-directed RNA polymerase subunit beta (1372 aa).

Belongs to the RNA polymerase beta chain family. The RNAP catalytic core consists of 2 alpha, 1 beta, 1 beta' and 1 omega subunit. When a sigma factor is associated with the core the holoenzyme is formed, which can initiate transcription.

The enzyme catalyses RNA(n) + a ribonucleoside 5'-triphosphate = RNA(n+1) + diphosphate. Functionally, DNA-dependent RNA polymerase catalyzes the transcription of DNA into RNA using the four ribonucleoside triphosphates as substrates. The protein is DNA-directed RNA polymerase subunit beta of Psychrobacter cryohalolentis (strain ATCC BAA-1226 / DSM 17306 / VKM B-2378 / K5).